A 120-amino-acid polypeptide reads, in one-letter code: UPF0231 protein YacL (120 aa).

This sequence belongs to the UPF0231 family.

This Escherichia coli O81 (strain ED1a) protein is UPF0231 protein YacL.